The following is a 155-amino-acid chain: 6,7-dimethyl-8-ribityllumazine synthase (155 aa).

Residues phenylalanine 23, 57 to 59 (AFE), and 81 to 83 (AVI) contribute to the 5-amino-6-(D-ribitylamino)uracil site. (2S)-2-hydroxy-3-oxobutyl phosphate is bound at residue 86 to 87 (ST). Residue histidine 89 is the Proton donor of the active site. Phenylalanine 114 contacts 5-amino-6-(D-ribitylamino)uracil. Arginine 128 contributes to the (2S)-2-hydroxy-3-oxobutyl phosphate binding site.

Belongs to the DMRL synthase family.

The enzyme catalyses (2S)-2-hydroxy-3-oxobutyl phosphate + 5-amino-6-(D-ribitylamino)uracil = 6,7-dimethyl-8-(1-D-ribityl)lumazine + phosphate + 2 H2O + H(+). Its pathway is cofactor biosynthesis; riboflavin biosynthesis; riboflavin from 2-hydroxy-3-oxobutyl phosphate and 5-amino-6-(D-ribitylamino)uracil: step 1/2. In terms of biological role, catalyzes the formation of 6,7-dimethyl-8-ribityllumazine by condensation of 5-amino-6-(D-ribitylamino)uracil with 3,4-dihydroxy-2-butanone 4-phosphate. This is the penultimate step in the biosynthesis of riboflavin. The protein is 6,7-dimethyl-8-ribityllumazine synthase of Desulfatibacillum aliphaticivorans.